A 229-amino-acid polypeptide reads, in one-letter code: DNA mismatch repair protein MutH (229 aa).

This sequence belongs to the MutH family.

It is found in the cytoplasm. Its function is as follows. Sequence-specific endonuclease that cleaves unmethylated GATC sequences. It is involved in DNA mismatch repair. The sequence is that of DNA mismatch repair protein MutH from Escherichia coli (strain K12 / MC4100 / BW2952).